The primary structure comprises 414 residues: MNRQVVTSTLGRRGVASTILNAQQQQRPFSSTTTRCAAEDDSKKPAAAPSTPRAAAPGPISASRQKSEAAVGKLTQLRGSFTSLTNDNSFHKTLPAGARDARRLAAAPIAGKGAGAGAVAPLGGGGGASGAPKVINVRSLKGTLGSRGSNNIPGAVAPGAALRPRFAAGPGAAAGRPRFGAAASPGAGPTGAARRPPFGARRARPAGDKKRSGGSGDKRPRGDDYDAPPTEEEKAFLRGLEQGKVTEYVPKLTPDTLLGYGPPVATDAALGKVESAMRTMRILGGGLPFNDQSGVTSDPTAIKHRYVHEKKPVFFSSVEEKEWVRESLDKFAVSEGPEKKTKQKILETSVLGKYEEPKYVESLTETVKMVEKYQGGTFSYAPSDADKFNKKLNQLLAAGLPRAAPAPAQAQKKA.

Over residues 20–35 (LNAQQQQRPFSSTTTR) the composition is skewed to polar residues. 2 disordered regions span residues 20-71 (LNAQ…EAAV) and 168-229 (AGPG…DAPP). 2 stretches are compositionally biased toward low complexity: residues 45-59 (PAAAPSTPRAAAPGP) and 168-200 (AGPGAAAGRPRFGAAASPGAGPTGAARRPPFGA). The span at 205–224 (PAGDKKRSGGSGDKRPRGDD) shows a compositional bias: basic and acidic residues.

This sequence belongs to the mitochondrion-specific ribosomal protein mS46 family. As to quaternary structure, component of the mitochondrial small ribosomal subunit (mt-SSU). Mature N.crassa 74S mitochondrial ribosomes consist of a small (37S) and a large (54S) subunit. The 37S small subunit contains a 16S ribosomal RNA (16S mt-rRNA) and 32 different proteins. The 54S large subunit contains a 23S rRNA (23S mt-rRNA) and 42 different proteins.

It localises to the mitochondrion. Functionally, component of the mitochondrial ribosome (mitoribosome), a dedicated translation machinery responsible for the synthesis of mitochondrial genome-encoded proteins, including at least some of the essential transmembrane subunits of the mitochondrial respiratory chain. The mitoribosomes are attached to the mitochondrial inner membrane and translation products are cotranslationally integrated into the membrane. The protein is Small ribosomal subunit protein mS46 (rsm28) of Neurospora crassa (strain ATCC 24698 / 74-OR23-1A / CBS 708.71 / DSM 1257 / FGSC 987).